Reading from the N-terminus, the 629-residue chain is UvrABC system protein C (629 aa).

The 80-residue stretch at 26 to 105 (TSPGIYQFKN…IKELKPRYNV (80 aa)) folds into the GIY-YIG domain. The 36-residue stretch at 219–254 (SALIRSLTENMHLAATELRFEQAAEIKAQIESLKRY) folds into the UVR domain.

Belongs to the UvrC family. Interacts with UvrB in an incision complex.

It localises to the cytoplasm. In terms of biological role, the UvrABC repair system catalyzes the recognition and processing of DNA lesions. UvrC both incises the 5' and 3' sides of the lesion. The N-terminal half is responsible for the 3' incision and the C-terminal half is responsible for the 5' incision. The polypeptide is UvrABC system protein C (Chlorobium chlorochromatii (strain CaD3)).